We begin with the raw amino-acid sequence, 95 residues long: Aspartyl/glutamyl-tRNA(Asn/Gln) amidotransferase subunit C (95 aa).

Belongs to the GatC family. Heterotrimer of A, B and C subunits.

The enzyme catalyses L-glutamyl-tRNA(Gln) + L-glutamine + ATP + H2O = L-glutaminyl-tRNA(Gln) + L-glutamate + ADP + phosphate + H(+). The catalysed reaction is L-aspartyl-tRNA(Asn) + L-glutamine + ATP + H2O = L-asparaginyl-tRNA(Asn) + L-glutamate + ADP + phosphate + 2 H(+). Functionally, allows the formation of correctly charged Asn-tRNA(Asn) or Gln-tRNA(Gln) through the transamidation of misacylated Asp-tRNA(Asn) or Glu-tRNA(Gln) in organisms which lack either or both of asparaginyl-tRNA or glutaminyl-tRNA synthetases. The reaction takes place in the presence of glutamine and ATP through an activated phospho-Asp-tRNA(Asn) or phospho-Glu-tRNA(Gln). The polypeptide is Aspartyl/glutamyl-tRNA(Asn/Gln) amidotransferase subunit C (Acidithiobacillus ferrooxidans (strain ATCC 23270 / DSM 14882 / CIP 104768 / NCIMB 8455) (Ferrobacillus ferrooxidans (strain ATCC 23270))).